Here is a 72-residue protein sequence, read N- to C-terminus: Conorfamide-Tx2 (72 aa).

The N-terminal stretch at 1-19 (MSGRGFLLLALLLLVTVEA) is a signal peptide. Residues 20 to 25 (TRVEKK) constitute a propeptide that is removed on maturation. The tract at residues 32 to 39 (AWSGPRNR) is positively charged region crucial for activity against MRGPRX1 receptors. Ile-43 is modified (isoleucine amide). Positions 44-72 (GRRDMQSPLLSERLRFRALGFRQPSSQKQ) are excised as a propeptide.

This sequence belongs to the FARP (FMRFamide related peptide) family. In terms of tissue distribution, expressed by the venom duct.

It localises to the secreted. Functionally, this peptide activates human sensory neuron-specific G-protein coupled receptors MRGPRX1, but not mouse receptors (EC(50)=0.54 uM). Compared with the agonist chloroquine (anti-malaria drug), it is 600-fold more potent. In vivo, induces itch sensation, since intradermal cheek injection into humanized transgenic mouse (mouse MRGPRX1 replaced by human MRGPRX1) induces scratching. In vivo, treatment of zebrafish larvae with high doses (10 uM) induces hypoactivity at the beginning of the experiment during the dark phase and hyperactivity in the strobe phase after one hour, even after the removal of the toxin from the solution. The sequence is that of Conorfamide-Tx2 from Conus textile (Cloth-of-gold cone).